The following is a 350-amino-acid chain: Ion-translocating oxidoreductase complex subunit D (350 aa).

A run of 3 helical transmembrane segments spans residues 36–56 (CYFFGWGTLIQIALAIAIAVA), 89–109 (IPALAPWWIAAIGVIFAILVV), and 124–144 (AMAAYVMLLISFPMQMTTWVA). At threonine 185 the chain carries FMN phosphoryl threonine. A run of 5 helical transmembrane segments spans residues 212-232 (GFGIGWALINLAYLAGGLVML), 239-259 (WQISTAILASLFVCASIGYLL), 265-285 (MGPLLHLFSGATMLAAFFIAT), 298-318 (LIFGSLIGLLVYLIRSFCGYP), and 319-339 (DAFAFAVLLANLCAPFIDYYV).

It belongs to the NqrB/RnfD family. The complex is composed of six subunits: RnfA, RnfB, RnfC, RnfD, RnfE and RnfG. It depends on FMN as a cofactor.

Its subcellular location is the cell inner membrane. In terms of biological role, part of a membrane-bound complex that couples electron transfer with translocation of ions across the membrane. The protein is Ion-translocating oxidoreductase complex subunit D of Shewanella loihica (strain ATCC BAA-1088 / PV-4).